The primary structure comprises 572 residues: EF-hand calcium-binding domain-containing protein 12 (572 aa).

Disordered stretches follow at residues 62–85 and 146–169; these read VPRK…KPIP and EQSA…PRLS. Positions 196–231 constitute an EF-hand domain; that stretch reads SRKIKILEIFHKVGQGENQRITREEFIAAVKAVGVP. Residue Glu-212 participates in Ca(2+) binding.

This Homo sapiens (Human) protein is EF-hand calcium-binding domain-containing protein 12 (EFCAB12).